The sequence spans 288 residues: Polyamine aminopropyltransferase (288 aa).

A PABS domain is found at 9–238; it reads ETLHDQFGQY…GIMTFAWATD (230 aa). Q33 is an S-methyl-5'-thioadenosine binding site. Spermidine is bound by residues H64 and D88. S-methyl-5'-thioadenosine contacts are provided by residues E108 and 140–141; that span reads DG. D158 acts as the Proton acceptor in catalysis. Residue 158-161 participates in spermidine binding; that stretch reads DCTD. An S-methyl-5'-thioadenosine-binding site is contributed by P165.

Belongs to the spermidine/spermine synthase family. In terms of assembly, homodimer or homotetramer.

The protein localises to the cytoplasm. It carries out the reaction S-adenosyl 3-(methylsulfanyl)propylamine + putrescine = S-methyl-5'-thioadenosine + spermidine + H(+). It participates in amine and polyamine biosynthesis; spermidine biosynthesis; spermidine from putrescine: step 1/1. In terms of biological role, catalyzes the irreversible transfer of a propylamine group from the amino donor S-adenosylmethioninamine (decarboxy-AdoMet) to putrescine (1,4-diaminobutane) to yield spermidine. The protein is Polyamine aminopropyltransferase of Shigella dysenteriae serotype 1 (strain Sd197).